Reading from the N-terminus, the 234-residue chain is MSLLAQLDRRIRYYGGLIVSCQPVPGSPLDNPAIVAAMALAAEQAGAVALRIEGLANLQAVRPLVTVPVIALIKRDLHDSPVRITPWLEDVNALAQAGADIIAVDGTRRQRPASVASLLAAIHRQGKNAMADCSSLDDALECWQLGFDMVGTTLSGYTAEGTPVEPDLALVKSLSAAGCRVVAEGRYNTPAQAAEAMRCGAWAVTVGSAITRLEHICGWYNSALKAAVCPANEQ.

This sequence belongs to the NanE family.

It catalyses the reaction an N-acyl-D-glucosamine 6-phosphate = an N-acyl-D-mannosamine 6-phosphate. It participates in amino-sugar metabolism; N-acetylneuraminate degradation; D-fructose 6-phosphate from N-acetylneuraminate: step 3/5. In terms of biological role, converts N-acetylmannosamine-6-phosphate (ManNAc-6-P) to N-acetylglucosamine-6-phosphate (GlcNAc-6-P). This chain is Putative N-acetylmannosamine-6-phosphate 2-epimerase, found in Klebsiella pneumoniae (strain 342).